The chain runs to 178 residues: Small ribosomal subunit protein bS16 (178 aa).

Residues 78–178 (KLGITQWTAG…AAPAEGEEQA (101 aa)) are disordered. Basic and acidic residues predominate over residues 91–113 (KKGEPGQKAKERAEERAQREADR). Positions 114-127 (AAAAAEAAAAPAEE) are enriched in low complexity. A compositionally biased stretch (acidic residues) spans 128–139 (APAEEAPAEEAA). A compositionally biased stretch (low complexity) spans 140–172 (AEAAPEAAAAEEAPAAEAAAEEAAPAAEEAAPA).

Belongs to the bacterial ribosomal protein bS16 family.

This Phenylobacterium zucineum (strain HLK1) protein is Small ribosomal subunit protein bS16.